The primary structure comprises 216 residues: Large ribosomal subunit protein bL25 (216 aa).

2 disordered regions span residues 1–21 and 192–216; these read MAET…GAVR and SADN…GKED. Residues 195-216 show a composition bias toward basic and acidic residues; sequence NEAKTEEAGEDKSEEKSSGKED.

Belongs to the bacterial ribosomal protein bL25 family. CTC subfamily. Part of the 50S ribosomal subunit; part of the 5S rRNA/L5/L18/L25 subcomplex. Contacts the 5S rRNA. Binds to the 5S rRNA independently of L5 and L18.

Its function is as follows. This is one of the proteins that binds to the 5S RNA in the ribosome where it forms part of the central protuberance. The sequence is that of Large ribosomal subunit protein bL25 from Parvibaculum lavamentivorans (strain DS-1 / DSM 13023 / NCIMB 13966).